We begin with the raw amino-acid sequence, 691 residues long: Elongation factor G (691 aa).

Positions 8-282 (EKTRNIGIMA…AVVDYLPSPV (275 aa)) constitute a tr-type G domain. GTP contacts are provided by residues 17–24 (AHIDAGKT), 81–85 (DTPGH), and 135–138 (NKMD).

It belongs to the TRAFAC class translation factor GTPase superfamily. Classic translation factor GTPase family. EF-G/EF-2 subfamily.

It is found in the cytoplasm. Catalyzes the GTP-dependent ribosomal translocation step during translation elongation. During this step, the ribosome changes from the pre-translocational (PRE) to the post-translocational (POST) state as the newly formed A-site-bound peptidyl-tRNA and P-site-bound deacylated tRNA move to the P and E sites, respectively. Catalyzes the coordinated movement of the two tRNA molecules, the mRNA and conformational changes in the ribosome. The protein is Elongation factor G of Caldicellulosiruptor saccharolyticus (strain ATCC 43494 / DSM 8903 / Tp8T 6331).